A 109-amino-acid chain; its full sequence is Putative polyketide cyclase (109 aa).

This sequence to polyketide cyclases.

Its function is as follows. Involved in developmentally regulated synthesis of a compound biosynthetically related to polyketide antibiotics which is essential for spore color in Streptomyces halstedii. This chain is Putative polyketide cyclase (sch4), found in Streptomyces halstedii.